A 232-amino-acid polypeptide reads, in one-letter code: Cytidylate kinase (232 aa).

11–19 (GPAGAGKST) contributes to the ATP binding site.

Belongs to the cytidylate kinase family. Type 1 subfamily.

It localises to the cytoplasm. It catalyses the reaction CMP + ATP = CDP + ADP. The enzyme catalyses dCMP + ATP = dCDP + ADP. This is Cytidylate kinase from Roseiflexus castenholzii (strain DSM 13941 / HLO8).